The chain runs to 265 residues: Undecaprenyl-diphosphatase (265 aa).

A run of 8 helical transmembrane segments spans residues 7–27 (IIVSIIIGVIEGITEFLPISS), 45–65 (TKILEIFIEFGSALSILYFFH), 86–106 (LHIILAILPTIFFGLLFYKKI), 108–128 (LLFNTYNVMYALILGGIFLLI), 145–165 (ISLLQSAIIGFFQIFCLYPGF), 186–206 (IEFSFIISIPLIMGASFYDFI), 214–234 (ILDLPIFFIGFMISFIVSILC), and 245–265 (TSLIFFGIYRFIISGLIYFIN).

Belongs to the UppP family.

Its subcellular location is the cell membrane. The catalysed reaction is di-trans,octa-cis-undecaprenyl diphosphate + H2O = di-trans,octa-cis-undecaprenyl phosphate + phosphate + H(+). Its function is as follows. Catalyzes the dephosphorylation of undecaprenyl diphosphate (UPP). Confers resistance to bacitracin. The protein is Undecaprenyl-diphosphatase of Buchnera aphidicola subsp. Acyrthosiphon pisum (strain Tuc7).